The primary structure comprises 493 residues: 6-aminohexanoate-cyclic-dimer hydrolase (493 aa).

Residues lysine 72 and serine 150 each act as charge relay system in the active site. Catalysis depends on serine 174, which acts as the Acyl-ester intermediate.

Belongs to the amidase family. Homodimer.

It catalyses the reaction 1,8-diazacyclotetradecane-2,9-dione + H2O = N-(6-aminohexanoyl)-6-aminohexanoate. The protein operates within xenobiotic degradation; nylon-6 oligomer degradation. With respect to regulation, strongly inhibited by 1 uM diisopropylphosphofluoridate and 10 uM p-chloromercuribenzoate but scarcely inhibited by 100 mM EDTA in vitro. In terms of biological role, specifically catalyzes the hydrolysis of 6-aminohexanoic acid cyclic dimer (1,8-diazacyclotetradecane-2,9-dione) to form the linear dimer 6-aminohexanoyl-6-aminohexanoic acid. Is inactive on 6-aminohexanoic acid oligomers (degree of polymerization 2 to 6), various other cyclic amides, cyclic diamides, linear amides, oligopeptides, and casein. Allows the bacterium to grow on a medium containing 6-aminohexanoic acid cyclic dimer as the sole carbon and nitrogen sources. This Paenarthrobacter ureafaciens protein is 6-aminohexanoate-cyclic-dimer hydrolase (nylA).